Consider the following 389-residue polypeptide: Phosphoglycerate kinase (389 aa).

Substrate contacts are provided by residues 21 to 23, Arg-36, 59 to 62, Arg-112, and Arg-145; these read DLN and HLGR. ATP-binding positions include Lys-196, Glu-318, and 344–347; that span reads GGDS.

The protein belongs to the phosphoglycerate kinase family. Monomer.

The protein localises to the cytoplasm. It catalyses the reaction (2R)-3-phosphoglycerate + ATP = (2R)-3-phospho-glyceroyl phosphate + ADP. Its pathway is carbohydrate degradation; glycolysis; pyruvate from D-glyceraldehyde 3-phosphate: step 2/5. This Desulfovibrio desulfuricans (strain ATCC 27774 / DSM 6949 / MB) protein is Phosphoglycerate kinase.